The following is a 247-amino-acid chain: tRNA pseudouridine synthase A (247 aa).

Catalysis depends on Asp52, which acts as the Nucleophile. Tyr113 provides a ligand contact to substrate.

The protein belongs to the tRNA pseudouridine synthase TruA family. As to quaternary structure, homodimer.

It catalyses the reaction uridine(38/39/40) in tRNA = pseudouridine(38/39/40) in tRNA. Functionally, formation of pseudouridine at positions 38, 39 and 40 in the anticodon stem and loop of transfer RNAs. The sequence is that of tRNA pseudouridine synthase A from Bartonella quintana (strain Toulouse) (Rochalimaea quintana).